A 402-amino-acid polypeptide reads, in one-letter code: MKRTFILMMDSFGIGAAADADKFGDVGANTLGHIAKACAAGDIEGRSALNLPNLNKLGLGHAGELASGYFPAGLKKDIEVVGAYGFAQELSSGKDTPSGHWEIAGVPVLFEWGYFKDHHNSFPQELLDAIVEKAGLSGYLGNCHASGTQVLDDLGEEHMSTGKPILYTSADSVFQIACHEETYGLEKLYELCHIVRELLEPYNIGRVIARPFVGSGKGNFKRTGNRHDYSVLPPAPTVLDYMKEAGGQVVSIGKIADIYANKGITKQVKGTGLTELWDRTLEEVKAAGDNTIVFTNFVDFDSSYGHRRDVKGYADALEYFDSRLPELFEILQDGDVVVLTADHGCDPTWGGTDHTREYIPVLFFGKPVKAGSVGRRETFADIGQSIAAYHGLPKLEYGTSFL.

6 residues coordinate Mn(2+): aspartate 10, aspartate 301, histidine 306, aspartate 342, histidine 343, and histidine 354.

Belongs to the phosphopentomutase family. Requires Mn(2+) as cofactor.

It is found in the cytoplasm. It catalyses the reaction 2-deoxy-alpha-D-ribose 1-phosphate = 2-deoxy-D-ribose 5-phosphate. The catalysed reaction is alpha-D-ribose 1-phosphate = D-ribose 5-phosphate. It functions in the pathway carbohydrate degradation; 2-deoxy-D-ribose 1-phosphate degradation; D-glyceraldehyde 3-phosphate and acetaldehyde from 2-deoxy-alpha-D-ribose 1-phosphate: step 1/2. Functionally, isomerase that catalyzes the conversion of deoxy-ribose 1-phosphate (dRib-1-P) and ribose 1-phosphate (Rib-1-P) to deoxy-ribose 5-phosphate (dRib-5-P) and ribose 5-phosphate (Rib-5-P), respectively. The protein is Phosphopentomutase of Aeromonas salmonicida (strain A449).